Reading from the N-terminus, the 45-residue chain is Large ribosomal subunit protein bL34 (45 aa).

Belongs to the bacterial ribosomal protein bL34 family.

This is Large ribosomal subunit protein bL34 from Arthrobacter sp. (strain FB24).